The chain runs to 375 residues: Queuine tRNA-ribosyltransferase (375 aa).

The active-site Proton acceptor is the Asp-89. Residues 89–93 (DSGGF), Asp-143, Gln-187, and Gly-214 contribute to the substrate site. The RNA binding stretch occupies residues 245–251 (GVGKPED). The Nucleophile role is filled by Asp-264. The interval 269 to 273 (TRNAR) is RNA binding; important for wobble base 34 recognition. Positions 302, 304, 307, and 333 each coordinate Zn(2+).

This sequence belongs to the queuine tRNA-ribosyltransferase family. Homodimer. Within each dimer, one monomer is responsible for RNA recognition and catalysis, while the other monomer binds to the replacement base PreQ1. It depends on Zn(2+) as a cofactor.

The catalysed reaction is 7-aminomethyl-7-carbaguanine + guanosine(34) in tRNA = 7-aminomethyl-7-carbaguanosine(34) in tRNA + guanine. The protein operates within tRNA modification; tRNA-queuosine biosynthesis. In terms of biological role, catalyzes the base-exchange of a guanine (G) residue with the queuine precursor 7-aminomethyl-7-deazaguanine (PreQ1) at position 34 (anticodon wobble position) in tRNAs with GU(N) anticodons (tRNA-Asp, -Asn, -His and -Tyr). Catalysis occurs through a double-displacement mechanism. The nucleophile active site attacks the C1' of nucleotide 34 to detach the guanine base from the RNA, forming a covalent enzyme-RNA intermediate. The proton acceptor active site deprotonates the incoming PreQ1, allowing a nucleophilic attack on the C1' of the ribose to form the product. After dissociation, two additional enzymatic reactions on the tRNA convert PreQ1 to queuine (Q), resulting in the hypermodified nucleoside queuosine (7-(((4,5-cis-dihydroxy-2-cyclopenten-1-yl)amino)methyl)-7-deazaguanosine). This Salmonella agona (strain SL483) protein is Queuine tRNA-ribosyltransferase.